The primary structure comprises 666 residues: MKQYAIQPATLEFNAEGTPVSRDFDDVYFSNDNGLEETRYVFLGGNRLAERFPVHSHPLFIVAESGFGTGLNFLTLWQAFDSFRSAHPQATLQRLHFISFEKFPLTRDDLALAHQHWPELAPWAEQLQAQWPLPLPGCHRLLLDRGRVTLDLWFGDINELTDQLDATLNQTVDAWFLDGFAPAKNPDMWTPNLFNAMARLARPGATLATFTSAGFVRRGLQEAGFTMQKRKGFGRKREMLCGVMEQHRMPTLSAPWFYRSGSEKRETAIIGGGIASALLSLALLRRGWQVTLYCADDQPAQGASGNRQGALYPLLSKHDAAINRFFPTAFTFARRLYDALPVSFDHDWCGVTQLGWDEKSQQKITQMLSLALPAGLASALNAEEAEQAVGVTTRCGGITYPAGSWLCPEQLTRAVIALATEQGLQTRFRHTLTSLVAQESRWQLRFTSGETASHETVVLANGHQINRFDQTQPLPVYAVGGQVSHIPTTPALSALRQVLCYDGYLTPQNPHNQQHCIGASYHRGDESTVWREEDQRQNRQRLLDCFPDAKWATEVDVSGNSARCGVRCATRDHLPMVGNVPDYHATLTHYADLADNKTSAAPAPVYPGLFVLGALGSRGLCSAPLCAEILAAQMSNEPIPLDASTLAALNPNRLWVRKLLKGKAVK.

A tRNA (mnm(5)s(2)U34)-methyltransferase region spans residues 1–245 (MKQYAIQPAT…KREMLCGVME (245 aa)). Positions 270-666 (IGGGIASALL…RKLLKGKAVK (397 aa)) are FAD-dependent cmnm(5)s(2)U34 oxidoreductase.

The protein in the N-terminal section; belongs to the methyltransferase superfamily. tRNA (mnm(5)s(2)U34)-methyltransferase family. This sequence in the C-terminal section; belongs to the DAO family. FAD is required as a cofactor.

The protein resides in the cytoplasm. It catalyses the reaction 5-aminomethyl-2-thiouridine(34) in tRNA + S-adenosyl-L-methionine = 5-methylaminomethyl-2-thiouridine(34) in tRNA + S-adenosyl-L-homocysteine + H(+). Its function is as follows. Catalyzes the last two steps in the biosynthesis of 5-methylaminomethyl-2-thiouridine (mnm(5)s(2)U) at the wobble position (U34) in tRNA. Catalyzes the FAD-dependent demodification of cmnm(5)s(2)U34 to nm(5)s(2)U34, followed by the transfer of a methyl group from S-adenosyl-L-methionine to nm(5)s(2)U34, to form mnm(5)s(2)U34. The protein is tRNA 5-methylaminomethyl-2-thiouridine biosynthesis bifunctional protein MnmC of Salmonella paratyphi A (strain ATCC 9150 / SARB42).